The following is a 346-amino-acid chain: Cyclin-dependent kinase 20 (346 aa).

Residues 4–288 (YCILGRIGEG…ASKALLHQYF (285 aa)) form the Protein kinase domain. Residues 10-18 (IGEGAHGIV) and Lys33 contribute to the ATP site. Asp127 serves as the catalytic Proton acceptor.

The protein belongs to the protein kinase superfamily. CMGC Ser/Thr protein kinase family. CDC2/CDKX subfamily. As to quaternary structure, monomer. Interacts with TBC1D32. Interacts with MAK.

It localises to the nucleus. The protein resides in the cytoplasm. It is found in the cell projection. The protein localises to the cilium. The enzyme catalyses L-seryl-[protein] + ATP = O-phospho-L-seryl-[protein] + ADP + H(+). The catalysed reaction is L-threonyl-[protein] + ATP = O-phospho-L-threonyl-[protein] + ADP + H(+). Functionally, required for high-level Shh responses in the developing neural tube. Together with TBC1D32, controls the structure of the primary cilium by coordinating assembly of the ciliary membrane and axoneme, allowing GLI2 to be properly activated in response to SHH signaling. Involved in cell growth. Activates CDK2, a kinase involved in the control of the cell cycle, by phosphorylating residue 'Thr-160'. This Homo sapiens (Human) protein is Cyclin-dependent kinase 20 (CDK20).